The following is a 576-amino-acid chain: Beta-bisabolene synthase (576 aa).

(2E,6E)-farnesyl diphosphate contacts are provided by R286, D323, D327, R466, and N469. D323 and D327 together coordinate Mg(2+). The short motif at 323–327 (DDVYD) is the DDXXD motif element. The Mg(2+) site is built by N469, T473, and E477.

This sequence belongs to the terpene synthase family. Tpsb subfamily. The cofactor is Mg(2+). Mn(2+) is required as a cofactor.

Its function is as follows. Produces almost exclusively beta-bisabolene and only traces of alpha-bisabolol from (2E,6E)-farnesyl diphosphate in fragrance biosynthesis. The chain is Beta-bisabolene synthase from Santalum austrocaledonicum (Sandalwood).